Consider the following 146-residue polypeptide: Holo-[acyl-carrier-protein] synthase (146 aa).

Positions 9 and 58 each coordinate Mg(2+).

Belongs to the P-Pant transferase superfamily. AcpS family. Mg(2+) serves as cofactor.

The protein localises to the cytoplasm. It catalyses the reaction apo-[ACP] + CoA = holo-[ACP] + adenosine 3',5'-bisphosphate + H(+). Its function is as follows. Transfers the 4'-phosphopantetheine moiety from coenzyme A to a Ser of acyl-carrier-protein. This Baumannia cicadellinicola subsp. Homalodisca coagulata protein is Holo-[acyl-carrier-protein] synthase.